The chain runs to 208 residues: Guanylate kinase (208 aa).

Positions 5–184 constitute a Guanylate kinase-like domain; it reads GLLIVFSGPS…AAERVKCVIE (180 aa). ATP is bound at residue 12 to 19; the sequence is GPSGVGKG.

The protein belongs to the guanylate kinase family.

Its subcellular location is the cytoplasm. The enzyme catalyses GMP + ATP = GDP + ADP. Essential for recycling GMP and indirectly, cGMP. This chain is Guanylate kinase, found in Streptococcus pneumoniae serotype 4 (strain ATCC BAA-334 / TIGR4).